Consider the following 510-residue polypeptide: ATP synthase subunit alpha (510 aa).

Glycine 169–threonine 176 is an ATP binding site.

Belongs to the ATPase alpha/beta chains family. As to quaternary structure, F-type ATPases have 2 components, CF(1) - the catalytic core - and CF(0) - the membrane proton channel. CF(1) has five subunits: alpha(3), beta(3), gamma(1), delta(1), epsilon(1). CF(0) has three main subunits: a(1), b(2) and c(9-12). The alpha and beta chains form an alternating ring which encloses part of the gamma chain. CF(1) is attached to CF(0) by a central stalk formed by the gamma and epsilon chains, while a peripheral stalk is formed by the delta and b chains.

The protein localises to the cell inner membrane. The enzyme catalyses ATP + H2O + 4 H(+)(in) = ADP + phosphate + 5 H(+)(out). Functionally, produces ATP from ADP in the presence of a proton gradient across the membrane. The alpha chain is a regulatory subunit. This chain is ATP synthase subunit alpha, found in Anaeromyxobacter sp. (strain K).